Here is a 463-residue protein sequence, read N- to C-terminus: Thiamine-repressible acid phosphatase SPBC21H7.03c (463 aa).

An N-terminal signal peptide occupies residues 1 to 18; it reads MQLCIISLWFLAAFIVNA. H69 functions as the Nucleophile in the catalytic mechanism. N-linked (GlcNAc...) asparagine glycosylation is found at N98, N104, N221, and N324. The Proton donor role is filled by D341. N-linked (GlcNAc...) asparagine glycans are attached at residues N439 and N458.

This sequence belongs to the histidine acid phosphatase family.

It is found in the secreted. The protein localises to the cell wall. It catalyses the reaction a phosphate monoester + H2O = an alcohol + phosphate. In terms of biological role, may dephosphorylate thiamine phosphates. This Schizosaccharomyces pombe (strain 972 / ATCC 24843) (Fission yeast) protein is Thiamine-repressible acid phosphatase SPBC21H7.03c.